The primary structure comprises 480 residues: Cytochrome P450 monooxygenase ORF11 (480 aa).

The chain crosses the membrane as a helical span at residues 9–29 (LLLLPHLSALTPKTGFLIGLA). N-linked (GlcNAc...) asparagine glycosylation is found at Asn-265 and Asn-352. Position 449 (Cys-449) interacts with heme.

Belongs to the cytochrome P450 family. Requires heme as cofactor.

It is found in the membrane. The protein operates within sesquiterpene biosynthesis. Cytochrome P450 monooxygenase; part of the gene cluster that mediates the biosynthesis of PR-toxin, a bicyclic sesquiterpene belonging to the eremophilane class and acting as a mycotoxin. The first step of the pathway is catalyzed by the aristolochene synthase which performs the cyclization of trans,trans-farnesyl diphosphate (FPP) to the bicyclic sesquiterpene aristolochene. Following the formation of aristolochene, the non-oxygenated aristolochene is converted to the trioxygenated intermediate eremofortin B, via 7-epi-neopetasone. This conversion appears to involve three enzymes, a hydroxysterol oxidase-like enzyme, the quinone-oxidase prx3 that forms the quinone-type-structure in the bicyclic nucleus of aristolochene with the C8-oxo group and the C-3 hydroxyl group, and the P450 monooxygenase ORF6 that introduces the epoxide at the double bond between carbons 1 and 2. No monoxy or dioxy-intermediates have been reported to be released to the broth, so these three early oxidative reactions may be coupled together. Eremofortin B is further oxidized by another P450 monooxygenase, that introduces a second epoxide between carbons 7 and 11 prior to acetylation to eremofortin A by the acetyltransferase ORF8. The second epoxidation may be performed by a second P450 monooxygenase. After the acetylation step, eremofortin A is converted to eremofortin C and then to PR-toxin. First the conversion of eremofortin A to eremofortin C proceeds by oxidation of the side chain of the molecule at C-12 and is catalyzed by the short-chain oxidoreductase prx1. The cytochrome P450 monooxygenase ORF6 is probably also involved in this step. The primary alcohol formed at C-12 is finally oxidized by the short-chain alcohol dehydrogenase prx4 that forms PR-toxin. In Penicillium roqueforti (strain FM164), this protein is Cytochrome P450 monooxygenase ORF11.